Here is a 205-residue protein sequence, read N- to C-terminus: Adenylyl-sulfate kinase (205 aa).

Residue 31 to 38 coordinates ATP; that stretch reads GLSGAGKS. Ser-105 functions as the Phosphoserine intermediate in the catalytic mechanism.

It belongs to the APS kinase family.

The catalysed reaction is adenosine 5'-phosphosulfate + ATP = 3'-phosphoadenylyl sulfate + ADP + H(+). It functions in the pathway sulfur metabolism; hydrogen sulfide biosynthesis; sulfite from sulfate: step 2/3. Catalyzes the synthesis of activated sulfate. In Shewanella baltica (strain OS195), this protein is Adenylyl-sulfate kinase.